The following is a 143-amino-acid chain: Silver-binding protein SilE (143 aa).

Residues 1–20 (MKNIVLASLLGFGLISSAWA) form the signal peptide.

The protein to E.coli PcoE.

The protein localises to the periplasm. Functionally, component of the sil cation-efflux system that confers resistance to silver. In Salmonella typhimurium, this protein is Silver-binding protein SilE (silE).